Reading from the N-terminus, the 273-residue chain is Peptidoglycan-N-acetylglucosamine deacetylase BC_1974 (273 aa).

A helical membrane pass occupies residues isoleucine 10–isoleucine 30. The 187-residue stretch at lysine 69–glutamate 255 folds into the NodB homology domain. Catalysis depends on aspartate 76, which acts as the Proton acceptor. Residues aspartate 77, histidine 126, and histidine 130 each contribute to the Zn(2+) site. Histidine 230 acts as the Proton donor in catalysis.

It belongs to the polysaccharide deacetylase family. It depends on Zn(2+) as a cofactor. Co(2+) serves as cofactor. Ni(2+) is required as a cofactor.

The protein localises to the cell membrane. The enzyme catalyses peptidoglycan-N-acetyl-D-glucosamine + H2O = peptidoglycan-D-glucosamine + acetate.. Its activity is regulated as follows. Inhibited by the hydroxamate N-hydroxy-4-(naphthalene-1-yl)benzamide (NHNB). Functionally, catalyzes the deacetylation of N-acetylglucosamine (GlcNAc) residues in peptidoglycan. The protein is Peptidoglycan-N-acetylglucosamine deacetylase BC_1974 of Bacillus cereus (strain ATCC 14579 / DSM 31 / CCUG 7414 / JCM 2152 / NBRC 15305 / NCIMB 9373 / NCTC 2599 / NRRL B-3711).